We begin with the raw amino-acid sequence, 547 residues long: Dihydroxy-acid dehydratase (547 aa).

Residue aspartate 78 coordinates Mg(2+). Cysteine 119 is a [2Fe-2S] cluster binding site. 2 residues coordinate Mg(2+): aspartate 120 and lysine 121. Lysine 121 is subject to N6-carboxylysine. Cysteine 191 provides a ligand contact to [2Fe-2S] cluster. Position 439 (glutamate 439) interacts with Mg(2+). Serine 464 acts as the Proton acceptor in catalysis.

The protein belongs to the IlvD/Edd family. As to quaternary structure, homodimer. [2Fe-2S] cluster is required as a cofactor. The cofactor is Mg(2+).

It catalyses the reaction (2R)-2,3-dihydroxy-3-methylbutanoate = 3-methyl-2-oxobutanoate + H2O. The catalysed reaction is (2R,3R)-2,3-dihydroxy-3-methylpentanoate = (S)-3-methyl-2-oxopentanoate + H2O. It participates in amino-acid biosynthesis; L-isoleucine biosynthesis; L-isoleucine from 2-oxobutanoate: step 3/4. It functions in the pathway amino-acid biosynthesis; L-valine biosynthesis; L-valine from pyruvate: step 3/4. Functionally, functions in the biosynthesis of branched-chain amino acids. Catalyzes the dehydration of (2R,3R)-2,3-dihydroxy-3-methylpentanoate (2,3-dihydroxy-3-methylvalerate) into 2-oxo-3-methylpentanoate (2-oxo-3-methylvalerate) and of (2R)-2,3-dihydroxy-3-methylbutanoate (2,3-dihydroxyisovalerate) into 2-oxo-3-methylbutanoate (2-oxoisovalerate), the penultimate precursor to L-isoleucine and L-valine, respectively. This is Dihydroxy-acid dehydratase from Archaeoglobus fulgidus (strain ATCC 49558 / DSM 4304 / JCM 9628 / NBRC 100126 / VC-16).